A 412-amino-acid polypeptide reads, in one-letter code: MIERLKIAKNRLEAMNSFNFPAQDRHERAPLLGSEYDHSMARQLSLLNVVGMTKSVLMSSYFNLMLVFVPIGLIAGWFEWNAKSVFILNMLAIIPLASLLSFATEQLSIISGPTLGALLNASFGNAIELIVGVLALKRGELRIVQSSLLGSILSNLLLVFGMCLVTTGIRREITTFNITVAQTMIAMLALSTATILIPATFHYSLPDNANSENALLHVSRGTAVIVLIVYVLLLVFQLKTHKHVCHDPSEVEEETEPRILGLRSSIAMLAIVTVFVSLCADYLVGSIDQLVEEVNISKTFVGLVILPVVGNAAEHVTAIVVSYRGQMDLALGVAIGSSIQIALFLAPFLVIVGWIISQPLTLYFESLETVILFVSVFLVNYLIQDGATHWLEGVQLLALYAIVVLAFFYYPQ.

Over Met1–Ser55 the chain is Cytoplasmic. Residues Val56–Gly76 traverse the membrane as a helical segment. Over Trp77–Lys83 the chain is Lumenal. The chain crosses the membrane as a helical span at residues Ser84–Thr104. Residues Glu105–Thr114 are Cytoplasmic-facing. The chain crosses the membrane as a helical span at residues Leu115 to Ala135. The Lumenal portion of the chain corresponds to Leu136 to Leu148. Residues Leu149–Ile169 traverse the membrane as a helical segment. Residues Arg170 to Asn177 lie on the Cytoplasmic side of the membrane. Residues Ile178 to Pro198 form a helical membrane-spanning segment. At Ala199–Leu215 the chain is on the lumenal side. The chain crosses the membrane as a helical span at residues Leu216–Phe236. At Gln237–Ser264 the chain is on the cytoplasmic side. The helical transmembrane segment at Ser265–Gly285 threads the bilayer. Residues Ser286 to Thr299 lie on the Lumenal side of the membrane. The helical transmembrane segment at Phe300–Val320 threads the bilayer. Topologically, residues Val321–Ala334 are cytoplasmic. Residues Ile335–Ile355 form a helical membrane-spanning segment. Over Ile356–Gln358 the chain is Lumenal. A helical membrane pass occupies residues Pro359–Val379. The Cytoplasmic portion of the chain corresponds to Asn380–His389. Residues Trp390–Tyr410 form a helical membrane-spanning segment. Topologically, residues Pro411 to Gln412 are lumenal.

It belongs to the Ca(2+):cation antiporter (CaCA) (TC 2.A.19) family.

Its subcellular location is the vacuole membrane. The protein localises to the endoplasmic reticulum membrane. Has a role in promoting intracellular calcium ion sequestration via the exchange of calcium ions for hydrogen ions across the vacuolar membrane. Involved also in manganese ion homeostasis via its uptake into the vacuole. The chain is Vacuolar calcium ion transporter (vcx1) from Schizosaccharomyces pombe (strain 972 / ATCC 24843) (Fission yeast).